A 184-amino-acid chain; its full sequence is Nutrient stress-induced DNA-binding protein (184 aa).

The protein belongs to the Dps family. As to quaternary structure, hexamer.

In terms of biological role, involved in protection of chromosomal DNA from damage under nutrient-limited and oxidative stress conditions. Binds heme. This is Nutrient stress-induced DNA-binding protein (dpsA) from Nostoc sp. (strain PCC 7120 / SAG 25.82 / UTEX 2576).